A 408-amino-acid chain; its full sequence is Glutamate N-acetyltransferase (408 aa).

Residues threonine 150, lysine 176, threonine 189, glutamate 271, asparagine 403, and threonine 408 each coordinate substrate. The active-site Nucleophile is the threonine 189.

The protein belongs to the ArgJ family. As to quaternary structure, heterotetramer of two alpha and two beta chains.

It localises to the cytoplasm. It catalyses the reaction N(2)-acetyl-L-ornithine + L-glutamate = N-acetyl-L-glutamate + L-ornithine. Its pathway is amino-acid biosynthesis; L-arginine biosynthesis; L-ornithine and N-acetyl-L-glutamate from L-glutamate and N(2)-acetyl-L-ornithine (cyclic): step 1/1. Its function is as follows. Catalyzes the transfer of the acetyl group from N(2)-acetylornithine to glutamate, forming N-acetylglutamate and L-ornithine. The polypeptide is Glutamate N-acetyltransferase (Methanococcus maripaludis (strain C7 / ATCC BAA-1331)).